Reading from the N-terminus, the 114-residue chain is Non-specific lipid-transfer protein 2 (114 aa).

The signal sequence occupies residues 1–23 (MEMVNKIACFVLLCMVVVAPHAE). 4 disulfide bridges follow: Cys-27/Cys-73, Cys-37/Cys-50, Cys-51/Cys-96, and Cys-71/Cys-110.

It belongs to the plant LTP family.

Functionally, plant non-specific lipid-transfer proteins transfer phospholipids as well as galactolipids across membranes. May play a role in wax or cutin deposition in the cell walls of expanding epidermal cells and certain secretory tissues. In Solanum chilense (Tomato), this protein is Non-specific lipid-transfer protein 2.